Consider the following 310-residue polypeptide: Dicarboxylate carrier UCP2 (310 aa).

Topologically, residues 1–10 (MVGFRAGDVP) are mitochondrial intermembrane. A helical membrane pass occupies residues 11–32 (PTATVKFIGAGTAACIADLFTF). Solcar repeat units follow at residues 11–107 (PTAT…VKQF), 115–204 (AGIG…IKDA), and 213–298 (DDLP…LKRA). Topologically, residues 33-78 (PLDTAKVRLQIQGENKASTNMGRGPVKYRGVFGTISTMVRVEGPRS) are mitochondrial matrix. Residues 79–101 (LYSGLVAGLQRQMSFASVRIGLY) form a helical membrane-spanning segment. Over 102–120 (DSVKQFYTKGSDHAGIGSR) the chain is Mitochondrial intermembrane. The helical transmembrane segment at 121 to 137 (LMAGCTTGAMAVAVAQP) threads the bilayer. Residues 138 to 181 (TDVLKVRFQAQVSAGASKRYHSTMDAYRTIAKEEGFRGLWKGTG) lie on the Mitochondrial matrix side of the membrane. The helical transmembrane segment at 182–198 (PNITRNAIVNCTELVTY) threads the bilayer. Over 199–215 (DLIKDALLKSSLMTDDL) the chain is Mitochondrial intermembrane. A helical transmembrane segment spans residues 216-235 (PCHFTSAFGAGFCTTIIASP). Over 236 to 269 (VDVVKTRYMNSAQGQYSSALNCAVAMLTKKGPKA) the chain is Mitochondrial matrix. The helical transmembrane segment at 270-292 (FFKGFMPSFLRLGSWNVVMFVTY) threads the bilayer. The purine nucleotide binding stretch occupies residues 277-299 (SFLRLGSWNVVMFVTYEQLKRAM). The Mitochondrial intermembrane portion of the chain corresponds to 293 to 310 (EQLKRAMMAARQNWHTPL).

The protein belongs to the mitochondrial carrier (TC 2.A.29) family. Homotetramer. Adopts an asymmetrical dimer of dimers functional form.

The protein localises to the mitochondrion inner membrane. It carries out the reaction L-aspartate(out) + phosphate(in) + H(+)(in) = L-aspartate(in) + phosphate(out) + H(+)(out). The catalysed reaction is oxaloacetate(out) + phosphate(in) + H(+)(in) = oxaloacetate(in) + phosphate(out) + H(+)(out). It catalyses the reaction (S)-malate(out) + phosphate(in) + H(+)(in) = (S)-malate(in) + phosphate(out) + H(+)(out). The enzyme catalyses malonate(out) + phosphate(in) + H(+)(in) = malonate(in) + phosphate(out) + H(+)(out). It carries out the reaction sulfate(out) + phosphate(in) + H(+)(in) = sulfate(in) + phosphate(out) + H(+)(out). The catalysed reaction is (S)-malate(out) = (S)-malate(in). It catalyses the reaction L-aspartate(out) = L-aspartate(in). The enzyme catalyses phosphate(in) = phosphate(out). It carries out the reaction chloride(in) = chloride(out). The catalysed reaction is H(+)(in) = H(+)(out). It catalyses the reaction a long-chain fatty acid(out) = a long-chain fatty acid(in). In terms of biological role, UCP are mitochondrial transporter proteins that create proton leaks across the inner mitochondrial membrane, thus uncoupling oxidative phosphorylation from ATP synthesis. As a result, energy is dissipated in the form of heat. Its function is as follows. Antiporter that exports dicarboxylate intermediates of the Krebs cycle in exchange for phosphate plus a proton across the inner membrane of mitochondria, a process driven by mitochondrial motive force with an overall impact on glycolysis, glutaminolysis and glutathione-dependent redox balance. Continuous export of oxaloacetate and related four-carbon dicarboxylates from mitochondrial matrix into the cytosol negatively regulates the oxidation of acetyl-CoA substrates via the Krebs cycle, lowering the ATP/ADP ratio and reactive oxygen species (ROS) production. May mediate inducible proton entry into the mitochondrial matrix affecting ATP turnover as a protection mechanism against oxidative stress. The proton currents are most likely associated with fatty acid flipping across the inner membrane of mitochondria in a metabolic process regulated by free fatty acids and purine nucleotides. In Danio rerio (Zebrafish), this protein is Dicarboxylate carrier UCP2 (ucp2).